The primary structure comprises 485 residues: NGFI-A-binding protein 1 (485 aa).

The tract at residues 4 to 82 (ALPRTLGELQ…RDWVTNPGLF (79 aa)) is NCD1. Residues lysine 126, lysine 129, and lysine 143 each participate in a glycyl lysine isopeptide (Lys-Gly) (interchain with G-Cter in SUMO2) cross-link. The tract at residues 160–187 (WQGHHATESEHSLSPADVGSPASPKESS) is disordered. Phosphoserine occurs at positions 171 and 182. Lysine 211 participates in a covalent cross-link: Glycyl lysine isopeptide (Lys-Gly) (interchain with G-Cter in SUMO2). The NCD2 stretch occupies residues 220 to 309 (LLKNNKKLAK…ARQVSREVTY (90 aa)). Residues 306–337 (EVTYKYTYRTTRLKCGERDELSPKRIKVEDGF) are necessary for nuclear localization. Serine 327 carries the post-translational modification Phosphoserine. Lysine 332 participates in a covalent cross-link: Glycyl lysine isopeptide (Lys-Gly) (interchain with G-Cter in SUMO1); alternate. Residue lysine 332 forms a Glycyl lysine isopeptide (Lys-Gly) (interchain with G-Cter in SUMO2); alternate linkage. Residues lysine 354, lysine 368, and lysine 372 each participate in a glycyl lysine isopeptide (Lys-Gly) (interchain with G-Cter in SUMO2) cross-link. Residues 398–432 (RQSSGEHSPDGLPSDGSDGQGERPLNLRMPNVQNR) are disordered. The residue at position 405 (serine 405) is a Phosphoserine. Residues lysine 452, lysine 463, and lysine 475 each participate in a glycyl lysine isopeptide (Lys-Gly) (interchain with G-Cter in SUMO2) cross-link. Lysine 478 is covalently cross-linked (Glycyl lysine isopeptide (Lys-Gly) (interchain with G-Cter in SUMO1); alternate). Lysine 478 is covalently cross-linked (Glycyl lysine isopeptide (Lys-Gly) (interchain with G-Cter in SUMO2); alternate).

This sequence belongs to the NAB family. In terms of assembly, homomultimers may associate with EGR1 bound to DNA.

It localises to the nucleus. In terms of biological role, acts as a transcriptional repressor for zinc finger transcription factors EGR1 and EGR2. This Mesocricetus auratus (Golden hamster) protein is NGFI-A-binding protein 1 (NAB1).